The chain runs to 807 residues: Anaphase-promoting complex subunit 4 (807 aa).

Residue Y469 is modified to Phosphotyrosine. The interval D755–A788 is disordered. Phosphoserine occurs at positions 757 and 758. The segment covering K770 to Q785 has biased composition (basic and acidic residues). K772 participates in a covalent cross-link: Glycyl lysine isopeptide (Lys-Gly) (interchain with G-Cter in SUMO2). A phosphoserine mark is found at S777 and S779. K797 is covalently cross-linked (Glycyl lysine isopeptide (Lys-Gly) (interchain with G-Cter in SUMO2)).

The protein belongs to the APC4 family. As to quaternary structure, the mammalian APC/C is composed at least of 14 distinct subunits ANAPC1, ANAPC2, CDC27/APC3, ANAPC4, ANAPC5, CDC16/APC6, ANAPC7, CDC23/APC8, ANAPC10, ANAPC11, CDC26/APC12, ANAPC13, ANAPC15 and ANAPC16 that assemble into a complex of at least 19 chains with a combined molecular mass of around 1.2 MDa; APC/C interacts with FZR1 and FBXO5. In the context of the APC/C complex, directly interacts with UBE2S. Interacts with FBXO43.

It is found in the nucleus. The protein operates within protein modification; protein ubiquitination. Its function is as follows. Component of the anaphase promoting complex/cyclosome (APC/C), a cell cycle-regulated E3 ubiquitin ligase that controls progression through mitosis and the G1 phase of the cell cycle. The APC/C complex acts by mediating ubiquitination and subsequent degradation of target proteins: it mainly mediates the formation of 'Lys-11'-linked polyubiquitin chains and, to a lower extent, the formation of 'Lys-48'- and 'Lys-63'-linked polyubiquitin chains. The APC/C complex catalyzes assembly of branched 'Lys-11'-/'Lys-48'-linked branched ubiquitin chains on target proteins. This is Anaphase-promoting complex subunit 4 (Anapc4) from Mus musculus (Mouse).